The primary structure comprises 217 residues: Adapter protein MecA (217 aa).

Belongs to the MecA family. As to quaternary structure, homodimer.

Its function is as follows. Enables the recognition and targeting of unfolded and aggregated proteins to the ClpC protease or to other proteins involved in proteolysis. The protein is Adapter protein MecA of Listeria monocytogenes serotype 4b (strain CLIP80459).